The sequence spans 272 residues: 1,4-dihydroxy-2-naphthoyl-CoA synthase (272 aa).

Substrate contacts are provided by residues arginine 33, 72 to 76 (SGGDQ), tyrosine 84, 116 to 120 (YAIGG), threonine 142, serine 148, tyrosine 245, and lysine 260. Residue 141 to 143 (QTG) participates in hydrogencarbonate binding.

Belongs to the enoyl-CoA hydratase/isomerase family. MenB subfamily. Hydrogencarbonate serves as cofactor.

The enzyme catalyses 2-succinylbenzoyl-CoA + H(+) = 1,4-dihydroxy-2-naphthoyl-CoA + H2O. The protein operates within quinol/quinone metabolism; 1,4-dihydroxy-2-naphthoate biosynthesis; 1,4-dihydroxy-2-naphthoate from chorismate: step 6/7. It functions in the pathway quinol/quinone metabolism; menaquinone biosynthesis. In terms of biological role, converts o-succinylbenzoyl-CoA (OSB-CoA) to 1,4-dihydroxy-2-naphthoyl-CoA (DHNA-CoA). This chain is 1,4-dihydroxy-2-naphthoyl-CoA synthase, found in Staphylococcus epidermidis (strain ATCC 35984 / DSM 28319 / BCRC 17069 / CCUG 31568 / BM 3577 / RP62A).